The primary structure comprises 213 residues: Imidazole glycerol phosphate synthase subunit HisH (213 aa).

Residues 4–211 (NLGLIDYGMG…LTWLRNGAEP (208 aa)) enclose the Glutamine amidotransferase type-1 domain. The active-site Nucleophile is the Cys-82. Residues His-186 and Glu-188 contribute to the active site.

As to quaternary structure, heterodimer of HisH and HisF.

It localises to the cytoplasm. It carries out the reaction 5-[(5-phospho-1-deoxy-D-ribulos-1-ylimino)methylamino]-1-(5-phospho-beta-D-ribosyl)imidazole-4-carboxamide + L-glutamine = D-erythro-1-(imidazol-4-yl)glycerol 3-phosphate + 5-amino-1-(5-phospho-beta-D-ribosyl)imidazole-4-carboxamide + L-glutamate + H(+). The catalysed reaction is L-glutamine + H2O = L-glutamate + NH4(+). It functions in the pathway amino-acid biosynthesis; L-histidine biosynthesis; L-histidine from 5-phospho-alpha-D-ribose 1-diphosphate: step 5/9. IGPS catalyzes the conversion of PRFAR and glutamine to IGP, AICAR and glutamate. The HisH subunit catalyzes the hydrolysis of glutamine to glutamate and ammonia as part of the synthesis of IGP and AICAR. The resulting ammonia molecule is channeled to the active site of HisF. The chain is Imidazole glycerol phosphate synthase subunit HisH from Synechococcus sp. (strain CC9605).